The sequence spans 318 residues: Methionyl-tRNA formyltransferase (318 aa).

(6S)-5,6,7,8-tetrahydrofolate is bound at residue 112-115; the sequence is SILP.

It belongs to the Fmt family.

It catalyses the reaction L-methionyl-tRNA(fMet) + (6R)-10-formyltetrahydrofolate = N-formyl-L-methionyl-tRNA(fMet) + (6S)-5,6,7,8-tetrahydrofolate + H(+). Functionally, attaches a formyl group to the free amino group of methionyl-tRNA(fMet). The formyl group appears to play a dual role in the initiator identity of N-formylmethionyl-tRNA by promoting its recognition by IF2 and preventing the misappropriation of this tRNA by the elongation apparatus. The sequence is that of Methionyl-tRNA formyltransferase from Shewanella sp. (strain MR-4).